A 928-amino-acid polypeptide reads, in one-letter code: ATP-dependent DNA helicase PIF5 (928 aa).

The N-terminal 49 residues, 1–49 (MLSRLSAVWRPSRVALRIQRVDFTTCGNRLNRSTQPNEPPLVSGIAARS), are a transit peptide targeting the mitochondrion. Disordered regions lie at residues 29 to 141 (RLNR…DVAI) and 176 to 231 (LRAK…FSDA). The span at 52-61 (AKAEPVEKRG) shows a compositional bias: basic and acidic residues. 264-271 (GGAGSGKS) contacts ATP. Disordered stretches follow at residues 389–421 (PIPP…APSK), 481–513 (KSSA…AAAE), 545–572 (IYPS…EDTM), and 585–607 (STHE…SQPW). Over residues 550–566 (NDGSSQQTGSSNGANSV) the composition is skewed to polar residues. Residues 858–877 (QAYVALSRSTRLDNIRLLDF) mediate DNA binding. The interval 898 to 928 (EELDNEIEDDGTEGDEEALEGDGEYEGEVEE) is disordered.

It belongs to the helicase family. PIF1 subfamily. Monomer. Mg(2+) serves as cofactor.

Its subcellular location is the mitochondrion. It catalyses the reaction Couples ATP hydrolysis with the unwinding of duplex DNA at the replication fork by translocating in the 5'-3' direction. This creates two antiparallel DNA single strands (ssDNA). The leading ssDNA polymer is the template for DNA polymerase III holoenzyme which synthesizes a continuous strand.. The enzyme catalyses ATP + H2O = ADP + phosphate + H(+). In terms of biological role, DNA-dependent ATPase and 5'-3' DNA helicase required for the maintenance of mitochondrial (kinetoplast) genome stability. Involved in processing of minicircle Okazaki fragments. The protein is ATP-dependent DNA helicase PIF5 of Trypanosoma brucei brucei (strain 927/4 GUTat10.1).